Reading from the N-terminus, the 337-residue chain is Nodulation protein D 2 (337 aa).

The 58-residue stretch at 6–63 folds into the HTH lysR-type domain; sequence LDLNLLVVLDSLMTARNLTAAARSINLSQPAMSAAVARLRAYFGDELFTMRGRTLVPT. A DNA-binding region (H-T-H motif) is located at residues 23 to 42; sequence LTAAARSINLSQPAMSAAVA.

Belongs to the LysR transcriptional regulatory family.

Functionally, nodD regulates the expression of the nodABCFE genes which encode other nodulation proteins. NodD is also a negative regulator of its own expression. Binds flavonoids as inducers. In Bradyrhizobium sp. (strain NC92), this protein is Nodulation protein D 2 (nodD2).